The following is a 163-amino-acid chain: MGVTKKPDLNDPVLRAKLAKGMGHNYYGEPAWPNDLLYIFPVVILGTIACNVGLAVLEPSMIGEPADPFATPLEILPEWYFFPVFQILRTVPNKLLGVLLMVSVPLGLLTVPFLENVNKFQNPFRRPVATTVFLIGTAVALWLGIGATLPIEKSLTLGLFQID.

Transmembrane regions (helical) follow at residues 36–56 (LLYI…GLAV), 95–115 (LLGV…PFLE), and 131–151 (TVFL…TLPI).

The protein belongs to the cytochrome b family. PetD subfamily. As to quaternary structure, the 4 large subunits of the cytochrome b6-f complex are cytochrome b6, subunit IV (17 kDa polypeptide, petD), cytochrome f and the Rieske protein, while the 4 small subunits are petG, petL, petM and petN. The complex functions as a dimer.

The protein localises to the plastid. It localises to the chloroplast thylakoid membrane. In terms of biological role, component of the cytochrome b6-f complex, which mediates electron transfer between photosystem II (PSII) and photosystem I (PSI), cyclic electron flow around PSI, and state transitions. This is Cytochrome b6-f complex subunit 4 from Phalaenopsis aphrodite subsp. formosana (Moth orchid).